Reading from the N-terminus, the 694-residue chain is Lamina-associated polypeptide 2, isoform alpha (694 aa).

Residues 5 to 48 form the LEM-like domain; it reads LEDPSVLTKDKLKSELVANNVTLPAGEQRKDVYVQLYLQHLTAR. Disordered stretches follow at residues 47 to 117 and 150 to 209; these read ARNR…ELTN and REQG…FSEL. The segment at 49-108 is linker; sequence NRPPLPAGTNSKGPPDFSSDEEREPTPVLGSGAAAAGRSRAAVGRKATKKTDKPRQEDKD. Position 57 is a phosphothreonine (Thr-57). Residues Ser-59, Ser-66, and Ser-67 each carry the phosphoserine modification. The residue at position 74 (Thr-74) is a Phosphothreonine. Low complexity predominate over residues 78–93; the sequence is GSGAAAAGRSRAAVGR. Ser-79 is modified (phosphoserine). 2 positions are modified to omega-N-methylarginine: Arg-86 and Arg-88. A compositionally biased stretch (basic and acidic residues) spans 97-106; the sequence is KKTDKPRQED. A compositionally biased stretch (acidic residues) spans 107–117; that stretch reads KDDLDVTELTN. Positions 109 to 153 constitute an LEM domain; that stretch reads DLDVTELTNEDLLDQLVKYGVNPGPIVGTTRKLYEKKLLKLREQG. Thr-154 bears the Phosphothreonine mark. The segment covering 155–178 has biased composition (polar residues); that stretch reads ESRSSTPLPTISSSAENTRQNGSN. Residues Ser-156 and Ser-159 each carry the phosphoserine modification. A phosphothreonine mark is found at Thr-160 and Thr-164. Ser-166 and Ser-168 each carry phosphoserine. Residues 179 to 191 are compositionally biased toward basic and acidic residues; it reads DSDRYSDNEEGKK. Residues 190–196 carry the Nuclear localization signal motif; that stretch reads KKKEHKK. 6 positions are modified to phosphoserine: Ser-272, Ser-312, Ser-351, Ser-354, Ser-370, and Ser-424. The disordered stretch occupies residues 338–368; it reads QPLCPERSHISDQSPLSSKRKALEESESSQL. Residues 558 to 657 adopt a coiled-coil conformation; it reads TESCNQQLDL…VGRRYLWLKD (100 aa). An N6-acetyllysine modification is found at Lys-656.

Belongs to the LEM family. As to quaternary structure, interacts with LMNA, BANF1 and RB1 and with chromosomes. Associates directly or indirectly with lamins at specific cell-cycle stages. Interacts with CMTM6. Phosphorylated in a mitose-specific manner. In terms of tissue distribution, expressed in many tissues. Most abundant in adult thymus and fetal liver.

It localises to the nucleus. Its subcellular location is the chromosome. Functionally, may be involved in the structural organization of the nucleus and in the post-mitotic nuclear assembly. Plays an important role, together with LMNA, in the nuclear anchorage of RB1. TP and TP5 may play a role in T-cell development and function. TP5 is an immunomodulating pentapeptide. The sequence is that of Lamina-associated polypeptide 2, isoform alpha (TMPO) from Homo sapiens (Human).